Here is a 138-residue protein sequence, read N- to C-terminus: ATP synthase epsilon chain (138 aa).

This sequence belongs to the ATPase epsilon chain family. As to quaternary structure, F-type ATPases have 2 components, CF(1) - the catalytic core - and CF(0) - the membrane proton channel. CF(1) has five subunits: alpha(3), beta(3), gamma(1), delta(1), epsilon(1). CF(0) has three main subunits: a, b and c.

Its subcellular location is the cellular thylakoid membrane. Its function is as follows. Produces ATP from ADP in the presence of a proton gradient across the membrane. The protein is ATP synthase epsilon chain of Microcystis aeruginosa (strain NIES-843 / IAM M-2473).